A 460-amino-acid polypeptide reads, in one-letter code: Angiopoietin-related protein 3 (460 aa).

A signal peptide spans 1–16 (MFTIKLLLFIVPLVIS). Positions 17–165 (SRIDQDNSSF…PEHPEVTSLK (149 aa)) are sufficient to inhibit LPL lipase activity. Residues 17-207 (SRIDQDNSSF…EIENQLRRTS (191 aa)) are sufficient to inhibit LIPG/EL phospholipase activity. Residues 32–56 (EPKSRFAMLDDVKILANGLLQLGHG) form a required for inhibition of LPL lipase activity region. A coiled-coil region spans residues 85–210 (LSLQTSEIKE…NQLRRTSIQE (126 aa)). Asn115 is a glycosylation site (N-linked (GlcNAc...) asparagine). The O-linked (GalNAc) threonine glycan is linked to Thr226. The Fibrinogen C-terminal domain maps to 237-455 (VKHDGIPAEC…STKMLIHPTD (219 aa)). A disulfide bridge links Cys246 with Cys274. 2 N-linked (GlcNAc...) asparagine glycosylation sites follow: Asn296 and Asn357. A disulfide bridge connects residues Cys394 and Cys408.

In terms of assembly, interacts with ANGPTL8. Interacts with ITGB3. O-glycosylated at Thr-226 by GALNT2; blocks processing and activation by proprotein convertases. In terms of processing, in part proteolytically cleaved by proprotein convertases; proposed to be involved in activation. As to expression, expressed principally in liver. Weakly expressed in kidney. Binds to adipocytes. Increased expression and colocalization with activated ITGB3 in glomeruli of patients with nephrotic syndrome showing effaced podocyte foot processes (at protein level).

The protein localises to the secreted. It localises to the cell projection. The protein resides in the lamellipodium. Acts in part as a hepatokine that is involved in regulation of lipid and glucose metabolism. Proposed to play a role in the trafficking of energy substrates to either storage or oxidative tissues in response to food intake. Has a stimulatory effect on plasma triglycerides (TG), which is achieved by suppressing plasma TG clearance via inhibition of LPL activity. The inhibition of LPL activity appears to be an indirect mechanism involving recruitment of proprotein convertases PCSK6 and FURIN to LPL leading to cleavage and dissociation of LPL from the cell surface; the function does not require ANGPTL3 proteolytic cleavage but seems to be mediated by the N-terminal domain, and is not inhibited by GPIHBP1. Can inhibit endothelial lipase, causing increased plasma levels of high density lipoprotein (HDL) cholesterol and phospholipids. Can bind to adipocytes to activate lipolysis, releasing free fatty acids and glycerol. Suppresses LPL specifically in oxidative tissues which is required to route very low density lipoprotein (VLDL)-TG to white adipose tissue (WAT) for storage in response to food; the function may involve cooperation with circulating, liver-derived ANGPTL8 and ANGPTL4 expression in WAT. Contributes to lower plasma levels of low density lipoprotein (LDL)-cholesterol by a mechanism that is independent of the canonical pathway implicating APOE and LDLR. May stimulate hypothalamic LPL activity. In terms of biological role, in vitro inhibits LPL activity; not effective on GPIHBP1-stabilized LPL. Functionally, involved in angiogenesis. Binds to endothelial cells via integrin alpha-V/beta-3 (ITGAV:ITGB3), activates FAK, MAPK and Akt signaling pathways and induces cell adhesion and cell migration. Secreted from podocytes, may modulate properties of glomerular endothelial cells involving integrin alpha-V/beta-3 and Akt signaling. May increase the motility of podocytes. May induce actin filament rearrangements in podocytes implicating integrin alpha-V/beta-3 and Rac1 activation. Binds to hematopoietic stem cells (HSC) and is involved in the regulation of HSC activity probably implicating down-regulation of IKZF1/IKAROS. This chain is Angiopoietin-related protein 3 (ANGPTL3), found in Homo sapiens (Human).